The following is a 129-amino-acid chain: Transcription antitermination protein NusB (129 aa).

This sequence belongs to the NusB family.

Involved in transcription antitermination. Required for transcription of ribosomal RNA (rRNA) genes. Binds specifically to the boxA antiterminator sequence of the ribosomal RNA (rrn) operons. This chain is Transcription antitermination protein NusB, found in Staphylococcus aureus (strain bovine RF122 / ET3-1).